Consider the following 521-residue polypeptide: Maturase K (521 aa).

The protein belongs to the intron maturase 2 family. MatK subfamily.

The protein resides in the plastid. Its subcellular location is the chloroplast. Usually encoded in the trnK tRNA gene intron. Probably assists in splicing its own and other chloroplast group II introns. The protein is Maturase K of Kniphofia uvaria (Red-hot poker).